Reading from the N-terminus, the 177-residue chain is Large ribosomal subunit protein uL6 (177 aa).

Belongs to the universal ribosomal protein uL6 family. In terms of assembly, part of the 50S ribosomal subunit.

Functionally, this protein binds to the 23S rRNA, and is important in its secondary structure. It is located near the subunit interface in the base of the L7/L12 stalk, and near the tRNA binding site of the peptidyltransferase center. The chain is Large ribosomal subunit protein uL6 from Brucella canis (strain ATCC 23365 / NCTC 10854 / RM-666).